Here is a 146-residue protein sequence, read N- to C-terminus: UPF0310 protein YdcG (146 aa).

Belongs to the UPF0310 family.

The chain is UPF0310 protein YdcG (ydcG) from Bacillus subtilis (strain 168).